Consider the following 516-residue polypeptide: GMP synthase [glutamine-hydrolyzing] (516 aa).

Residues 8-198 (KILILDFGSQ…ALNICKCDAL (191 aa)) form the Glutamine amidotransferase type-1 domain. Cys-84 serves as the catalytic Nucleophile. Catalysis depends on residues His-172 and Glu-174. In terms of domain architecture, GMPS ATP-PPase spans 199–391 (WNIENIIEND…LGLPYNMLYR (193 aa)). ATP is bound at residue 226–232 (SGGVDSS).

Homodimer.

It catalyses the reaction XMP + L-glutamine + ATP + H2O = GMP + L-glutamate + AMP + diphosphate + 2 H(+). The protein operates within purine metabolism; GMP biosynthesis; GMP from XMP (L-Gln route): step 1/1. Functionally, catalyzes the synthesis of GMP from XMP. In Francisella philomiragia subsp. philomiragia (strain ATCC 25017 / CCUG 19701 / FSC 153 / O#319-036), this protein is GMP synthase [glutamine-hydrolyzing].